Here is a 490-residue protein sequence, read N- to C-terminus: ATP synthase subunit beta, chloroplastic (490 aa).

170-177 (GGXGVGKT) contacts ATP.

It belongs to the ATPase alpha/beta chains family. In terms of assembly, F-type ATPases have 2 components, CF(1) - the catalytic core - and CF(0) - the membrane proton channel. CF(1) has five subunits: alpha(3), beta(3), gamma(1), delta(1), epsilon(1). CF(0) has four main subunits: a(1), b(1), b'(1) and c(9-12).

Its subcellular location is the plastid. The protein resides in the chloroplast thylakoid membrane. It catalyses the reaction ATP + H2O + 4 H(+)(in) = ADP + phosphate + 5 H(+)(out). Functionally, produces ATP from ADP in the presence of a proton gradient across the membrane. The catalytic sites are hosted primarily by the beta subunits. This is ATP synthase subunit beta, chloroplastic from Ipomoea coccinea (Scarlet morning-glory).